The following is a 286-amino-acid chain: Probable alpha-ketoglutarate-dependent hypophosphite dioxygenase (286 aa).

The protein belongs to the PhyH family.

Its function is as follows. Required for hypophosphite oxidation. The polypeptide is Probable alpha-ketoglutarate-dependent hypophosphite dioxygenase (htxA) (Stutzerimonas stutzeri (Pseudomonas stutzeri)).